Here is a 348-residue protein sequence, read N- to C-terminus: Histidinol-phosphate aminotransferase (348 aa).

Position 210 is an N6-(pyridoxal phosphate)lysine (Lys-210).

Belongs to the class-II pyridoxal-phosphate-dependent aminotransferase family. Histidinol-phosphate aminotransferase subfamily. In terms of assembly, homodimer. Requires pyridoxal 5'-phosphate as cofactor.

The enzyme catalyses L-histidinol phosphate + 2-oxoglutarate = 3-(imidazol-4-yl)-2-oxopropyl phosphate + L-glutamate. It functions in the pathway amino-acid biosynthesis; L-histidine biosynthesis; L-histidine from 5-phospho-alpha-D-ribose 1-diphosphate: step 7/9. The chain is Histidinol-phosphate aminotransferase from Pseudomonas putida (strain ATCC 47054 / DSM 6125 / CFBP 8728 / NCIMB 11950 / KT2440).